A 336-amino-acid polypeptide reads, in one-letter code: Acetaldehyde dehydrogenase 1 (336 aa).

Residue 32–35 (SGVV) coordinates NAD(+). The active-site Acyl-thioester intermediate is C150. N309 lines the NAD(+) pocket.

Belongs to the acetaldehyde dehydrogenase family.

It catalyses the reaction acetaldehyde + NAD(+) + CoA = acetyl-CoA + NADH + H(+). This is Acetaldehyde dehydrogenase 1 (mhpF) from Mycobacterium ulcerans (strain Agy99).